An 85-amino-acid polypeptide reads, in one-letter code: uncharacterized protein (85 aa).

Belongs to the ycf76 family.

The protein resides in the plastid. It is found in the chloroplast. This is an uncharacterized protein from Saccharum hybrid (Sugarcane).